Here is a 610-residue protein sequence, read N- to C-terminus: MTQIFDSVSFLKTVTHQPGVYRMYNAEAVVIYVGKAKDLKKRLSSYFRKKVDSEKTKALVSNIAKIDVTVTHTETEALILEHNYIKQYLPKYNVLLRDDKSYPYIFLSAHRHPRVSLHRGAKKRKGEYFGPYPDSGAVRETLHLIQKIFPVRQCEDTVYANRTRPCLMYQIGRCAGPCVSSVISDVDYAELVGYLRLFLQGKDNQVLELLVQKMEIASQQLKFEDAAKFRDQIQAIRRVQEQQYVSEDSQEDMDVLGFAQENGIACIHILMIRQGKVLGSRSHFPKIPQNTNAQEVFDSFLTQYYLSHNEARTIPSRIILNQELAADVEAIQLALSDVAGRKVQFHTSPSGSRGRYLKLSNTNALTAMTTKINHKMTINQRFKALRDVLAMDSIARMECFDISHTMGESTIASCVVFNSEGPVKQEYRRYNITGITGGDDYAAMGQALERRYAKQLDVEKIPDIIFIDGGKGQLNRAHEIIVQYWGDWPKRPVMIGIAKGVTRKPGLETLITVDGDEFHLPSDDPALHLIQHIRDESHNHAIAGHRAKRGKTRKTSALEGIEGVGPKRRQALLKYTGGLQELKRASVEEIAKVPGISHSLAEIIYQALKQ.

The 79-residue stretch at 16 to 94 (HQPGVYRMYN…IKQYLPKYNV (79 aa)) folds into the GIY-YIG domain. The 36-residue stretch at 204–239 (NQVLELLVQKMEIASQQLKFEDAAKFRDQIQAIRRV) folds into the UVR domain.

This sequence belongs to the UvrC family. Interacts with UvrB in an incision complex.

The protein localises to the cytoplasm. Functionally, the UvrABC repair system catalyzes the recognition and processing of DNA lesions. UvrC both incises the 5' and 3' sides of the lesion. The N-terminal half is responsible for the 3' incision and the C-terminal half is responsible for the 5' incision. The chain is UvrABC system protein C from Vibrio vulnificus (strain CMCP6).